Consider the following 418-residue polypeptide: Serine--tRNA ligase (418 aa).

231–233 (TAE) provides a ligand contact to L-serine. Residue 262-264 (RRE) coordinates ATP. Glutamate 285 is a binding site for L-serine. Residue 349–352 (EISS) participates in ATP binding. Serine 384 contributes to the L-serine binding site.

The protein belongs to the class-II aminoacyl-tRNA synthetase family. Type-1 seryl-tRNA synthetase subfamily. As to quaternary structure, homodimer. The tRNA molecule binds across the dimer.

The protein resides in the cytoplasm. It carries out the reaction tRNA(Ser) + L-serine + ATP = L-seryl-tRNA(Ser) + AMP + diphosphate + H(+). It catalyses the reaction tRNA(Sec) + L-serine + ATP = L-seryl-tRNA(Sec) + AMP + diphosphate + H(+). Its pathway is aminoacyl-tRNA biosynthesis; selenocysteinyl-tRNA(Sec) biosynthesis; L-seryl-tRNA(Sec) from L-serine and tRNA(Sec): step 1/1. Catalyzes the attachment of serine to tRNA(Ser). Is also able to aminoacylate tRNA(Sec) with serine, to form the misacylated tRNA L-seryl-tRNA(Sec), which will be further converted into selenocysteinyl-tRNA(Sec). This is Serine--tRNA ligase from Coprothermobacter proteolyticus (strain ATCC 35245 / DSM 5265 / OCM 4 / BT).